Here is a 207-residue protein sequence, read N- to C-terminus: uncharacterized protein (207 aa).

Residues 177-197 (LILAIGFIIGILLPTFFILLG) traverse the membrane as a helical segment.

Its subcellular location is the membrane. This is an uncharacterized protein from Haemophilus influenzae (strain ATCC 51907 / DSM 11121 / KW20 / Rd).